Consider the following 461-residue polypeptide: L-cystine uptake protein TcyP (461 aa).

The next 10 membrane-spanning stretches (helical) occupy residues 1–21 (MTLF…LLYM), 33–53 (VFTA…IYGS), 72–92 (YVKL…LGAF), 104–124 (ISGL…AVGI), 183–203 (PTST…YLGV), 224–244 (IIMR…LAIM), 262–282 (FVIA…LLIT), 337–357 (LSIG…IMIA), 369–389 (FLFT…GVGG), and 393–413 (FAAL…GLLI).

The protein belongs to the dicarboxylate/amino acid:cation symporter (DAACS) (TC 2.A.23) family.

It localises to the membrane. Mediates uptake of L-cystine, the oxidized form of L-cysteine. The polypeptide is L-cystine uptake protein TcyP (tcyP) (Bacillus licheniformis (strain ATCC 14580 / DSM 13 / JCM 2505 / CCUG 7422 / NBRC 12200 / NCIMB 9375 / NCTC 10341 / NRRL NRS-1264 / Gibson 46)).